We begin with the raw amino-acid sequence, 193 residues long: Potassium-transporting ATPase KdpC subunit (193 aa).

A helical transmembrane segment spans residues 8 to 28 (VVLLIFLTLITGVAYPLLATG).

Belongs to the KdpC family. In terms of assembly, the system is composed of three essential subunits: KdpA, KdpB and KdpC.

It is found in the cell inner membrane. Its function is as follows. Part of the high-affinity ATP-driven potassium transport (or Kdp) system, which catalyzes the hydrolysis of ATP coupled with the electrogenic transport of potassium into the cytoplasm. This subunit acts as a catalytic chaperone that increases the ATP-binding affinity of the ATP-hydrolyzing subunit KdpB by the formation of a transient KdpB/KdpC/ATP ternary complex. This Photorhabdus laumondii subsp. laumondii (strain DSM 15139 / CIP 105565 / TT01) (Photorhabdus luminescens subsp. laumondii) protein is Potassium-transporting ATPase KdpC subunit.